The following is a 390-amino-acid chain: Nucleotide-sugar uncharacterized transporter 1 (390 aa).

10 helical membrane passes run 61–81 (ICGP…IIFM), 89–109 (IGFE…YLLM), 128–148 (SLLP…LANV), 155–175 (VGFY…AEFL), 182–201 (SFMK…VATV), 206–228 (FSLF…KILW), 249–269 (ITLL…ALSF), 278–298 (AILV…LALG), 306–326 (VVLG…IFGS), and 329–349 (GFIS…YTYL). The span at 356–365 (LKTSSSSSAL) shows a compositional bias: low complexity. The segment at 356 to 390 (LKTSSSSSALSEKKSRFSDLKDDDKNLEPYGSEAV) is disordered. Residues 366–382 (SEKKSRFSDLKDDDKNL) are compositionally biased toward basic and acidic residues.

This sequence belongs to the TPT transporter family. TPT (TC 2.A.7.9) subfamily.

It localises to the membrane. The chain is Nucleotide-sugar uncharacterized transporter 1 from Arabidopsis thaliana (Mouse-ear cress).